The following is a 309-amino-acid chain: Elongation factor Ts (309 aa).

An involved in Mg(2+) ion dislocation from EF-Tu region spans residues 82 to 85 (TDFV).

Belongs to the EF-Ts family.

Its subcellular location is the cytoplasm. Functionally, associates with the EF-Tu.GDP complex and induces the exchange of GDP to GTP. It remains bound to the aminoacyl-tRNA.EF-Tu.GTP complex up to the GTP hydrolysis stage on the ribosome. This Rickettsia rickettsii (strain Iowa) protein is Elongation factor Ts.